Reading from the N-terminus, the 304-residue chain is Meiotically up-regulated gene 86 protein (304 aa).

Residues 1 to 12 (MSSNPSRSNSRS) are compositionally biased toward low complexity. The disordered stretch occupies residues 1–23 (MSSNPSRSNSRSKNGDLESGLKF). A run of 6 helical transmembrane segments spans residues 93 to 113 (PAPFGLSAFAFTTFLLSLFNV), 123 to 143 (MVTAPAAFYGGLAQLLASMWE), 150 to 170 (FGGAVFGSYGCFWLSYASIFI), 188 to 208 (AIGLYLICWFIFTFLVLLCTV), 212 to 232 (LAFFSLFMSLDVCFLLLACAF), and 247 to 267 (VGGAFGIFSACAAWYNAMAGL).

The protein belongs to the acetate uptake transporter (AceTr) (TC 2.A.96) family.

The protein localises to the endoplasmic reticulum membrane. It is found in the golgi apparatus. Its subcellular location is the golgi stack membrane. It localises to the vacuole membrane. Has a role in meiosis. In Schizosaccharomyces pombe (strain 972 / ATCC 24843) (Fission yeast), this protein is Meiotically up-regulated gene 86 protein (mug86).